A 56-amino-acid polypeptide reads, in one-letter code: Protein SspF (56 aa).

This sequence belongs to the alpha/beta-type SASP family.

Its function is as follows. May play some important role in either sporulation or the dormant spore. The sequence is that of Protein SspF (sspF) from Priestia megaterium (strain ATCC 12872 / QMB1551) (Bacillus megaterium).